The primary structure comprises 146 residues: Transcriptional regulator MraZ (146 aa).

2 SpoVT-AbrB domains span residues 5–48 and 77–120; these read TSYH…TLEE and ASEC…SRAK.

This sequence belongs to the MraZ family. Forms oligomers.

It localises to the cytoplasm. The protein localises to the nucleoid. The sequence is that of Transcriptional regulator MraZ from Desulfosudis oleivorans (strain DSM 6200 / JCM 39069 / Hxd3) (Desulfococcus oleovorans).